Here is a 264-residue protein sequence, read N- to C-terminus: 3-methyl-2-oxobutanoate hydroxymethyltransferase (264 aa).

Aspartate 45 and aspartate 84 together coordinate Mg(2+). 3-methyl-2-oxobutanoate is bound by residues 45–46, aspartate 84, and lysine 112; that span reads DS. Glutamate 114 contributes to the Mg(2+) binding site. The active-site Proton acceptor is glutamate 181.

It belongs to the PanB family. As to quaternary structure, homodecamer; pentamer of dimers. Requires Mg(2+) as cofactor.

Its subcellular location is the cytoplasm. The enzyme catalyses 3-methyl-2-oxobutanoate + (6R)-5,10-methylene-5,6,7,8-tetrahydrofolate + H2O = 2-dehydropantoate + (6S)-5,6,7,8-tetrahydrofolate. The protein operates within cofactor biosynthesis; (R)-pantothenate biosynthesis; (R)-pantoate from 3-methyl-2-oxobutanoate: step 1/2. Catalyzes the reversible reaction in which hydroxymethyl group from 5,10-methylenetetrahydrofolate is transferred onto alpha-ketoisovalerate to form ketopantoate. The sequence is that of 3-methyl-2-oxobutanoate hydroxymethyltransferase from Shewanella piezotolerans (strain WP3 / JCM 13877).